The primary structure comprises 485 residues: Neuropeptide F receptor (485 aa).

Residues 1 to 91 (MIISMNQTEP…DSPWYHMLIS (91 aa)) are Extracellular-facing. The chain crosses the membrane as a helical span at residues 92–112 (MYGVLIVFGALGNTLVVIAVI). Residues 113–122 (RKPIMRTARN) are Cytoplasmic-facing. The chain crosses the membrane as a helical span at residues 123–143 (LFILNLAISDLLLCLVTMPLT). At 144–163 (LMEILSKYWPYGSCSILCKT) the chain is on the extracellular side. A disulfide bridge links C161 with C248. The helical transmembrane segment at 164–184 (IAMLQALCIFVSTISITAIAF) threads the bilayer. Topologically, residues 185-202 (DRYQVIVYPTRDSLQFVG) are cytoplasmic. The chain crosses the membrane as a helical span at residues 203–223 (AVTILAGIWALALLLASPLFV). Residues 224-262 (YKELINTDTPALLQQIGLQDTIPYCIEDWPSRNGRFYYS) lie on the Extracellular side of the membrane. Residues 263 to 283 (IFSLCVQYLVPILIVSVAYFG) traverse the membrane as a helical segment. Topologically, residues 284 to 317 (IYNKLKSRITVVAVQASSAQRKVERGRRMKRTNC) are cytoplasmic. The chain crosses the membrane as a helical span at residues 318–338 (LLISIAIIFGVSWLPLNFFNL). At 339–355 (YADMERSPVTQSMLVRY) the chain is on the extracellular side. Residues 356–376 (AICHMIGMSSACSNPLLYGWL) form a helical membrane-spanning segment. Residues 377 to 485 (NDNFRKEFQE…PSEVTKLMPR (109 aa)) are Cytoplasmic-facing.

This sequence belongs to the G-protein coupled receptor 1 family. As to expression, expressed in midgut, brain lobes and ventral nerve cord of larvae. In adults, expressed in a pair of dorsolateral neurons in the protocerebrum, and the central complex and a small number of neurons in the subesophageal ganglion (at protein level). Expressed in a subset of sugar-responsive PAIN neurons in the thoracic body but is absent from other peripheral PAIN neurons.

The protein resides in the membrane. Receptor for NPF. Integral part of the sensory system that mediates food signaling, providing the neural basis for the regulation of food response; coordinates larval foraging and social behavior changes during development. Required in dopaminergic (DA) neurons that innervate the mushroom body for satiety to suppress appetitive memory performance; a key factor in the internal state of hunger in the brain. NPF neurons coordinately modulate diverse sensory and motor neurons important for feeding, flight, and locomotion. NPF/NPFR pathway exerts its suppressive effect on larval aversion to diverse stressful stimuli (chemical stress and noxious heat) through attenuation of TRP channel-induced neuronal excitation. NPF neural signaling system plays a physiological role in acute modulation of alcohol sensitivity in adults, rather than a general response to intoxication by sedative agents. Activation and inhibition of the NPF system reduces and enhances ethanol preference, respectively. Sexual experience, the NPF system activity and ethanol consumption are all linked; sexual deprivation is a major contributor to enhanced ethanol preference. The chain is Neuropeptide F receptor from Drosophila melanogaster (Fruit fly).